The sequence spans 140 residues: Large ribosomal subunit protein uL11 (140 aa).

The protein belongs to the universal ribosomal protein uL11 family. Part of the ribosomal stalk of the 50S ribosomal subunit. Interacts with L10 and the large rRNA to form the base of the stalk. L10 forms an elongated spine to which L12 dimers bind in a sequential fashion forming a multimeric L10(L12)X complex. In terms of processing, one or more lysine residues are methylated.

Forms part of the ribosomal stalk which helps the ribosome interact with GTP-bound translation factors. This chain is Large ribosomal subunit protein uL11, found in Dehalococcoides mccartyi (strain CBDB1).